We begin with the raw amino-acid sequence, 187 residues long: UPF0340 protein stu1894 (187 aa).

This sequence belongs to the UPF0340 family.

This Streptococcus thermophilus (strain ATCC BAA-250 / LMG 18311) protein is UPF0340 protein stu1894.